The sequence spans 399 residues: Acetate kinase (399 aa).

Asn-9 provides a ligand contact to Mg(2+). Residue Lys-16 participates in ATP binding. Position 90 (Arg-90) interacts with substrate. Asp-147 acts as the Proton donor/acceptor in catalysis. ATP-binding positions include 207–211, 281–283, and 333–337; these read HLGNG, DFR, and GVGEN. Residue Glu-387 coordinates Mg(2+).

Belongs to the acetokinase family. Homodimer. Requires Mg(2+) as cofactor. Mn(2+) is required as a cofactor.

The protein resides in the cytoplasm. It carries out the reaction acetate + ATP = acetyl phosphate + ADP. It participates in metabolic intermediate biosynthesis; acetyl-CoA biosynthesis; acetyl-CoA from acetate: step 1/2. Catalyzes the formation of acetyl phosphate from acetate and ATP. Can also catalyze the reverse reaction. This is Acetate kinase from Mycobacterium sp. (strain KMS).